We begin with the raw amino-acid sequence, 466 residues long: UDP-N-acetylglucosamine--dolichyl-phosphate N-acetylglucosaminephosphotransferase (466 aa).

A helical membrane pass occupies residues 12–32 (AAFAVAAHAPVLGLILLGSIV). UDP-N-acetyl-alpha-D-glucosamine is bound at residue Asp57. An N-linked (GlcNAc...) asparagine glycan is attached at Asn59. Glu90 contacts UDP-N-acetyl-alpha-D-glucosamine. Transmembrane regions (helical) follow at residues 91–111 (SLGI…TVCL) and 124–144 (PYAS…LGFV). Residue Lys155 coordinates dolichyl phosphate. A run of 2 helical transmembrane segments spans residues 156–176 (IILT…SLSV) and 236–256 (GAAL…LCIF). Residue 255–263 (IFCTNSINI) participates in dolichyl phosphate binding. Residue Asn262 coordinates Mg(2+). 4 helical membrane-spanning segments follow: residues 263 to 283 (ILAG…VASV), 316 to 336 (DHQL…LALW), 345 to 365 (VFVG…SSIT), and 374 to 394 (LFFA…FSIV). Asn268 contributes to the UDP-N-acetyl-alpha-D-glucosamine binding site. Asp349 serves as a coordination point for Mg(2+). 398 to 400 (RHR) provides a ligand contact to UDP-N-acetyl-alpha-D-glucosamine. N-linked (GlcNAc...) asparagine glycosylation is present at Asn416. Residues 442–462 (CQVIACVLGFVVRYVLSAFLY) form a helical membrane-spanning segment.

It belongs to the glycosyltransferase 4 family. It depends on Mg(2+) as a cofactor.

It is found in the endoplasmic reticulum membrane. It carries out the reaction a di-trans,poly-cis-dolichyl phosphate + UDP-N-acetyl-alpha-D-glucosamine = an N-acetyl-alpha-D-glucosaminyl-diphospho-di-trans,poly-cis-dolichol + UMP. The protein operates within protein modification; protein glycosylation. Its activity is regulated as follows. Inhibited by natural nucleoside antibiotic tunicamycin, which acts as a structural analog and competitor of UDP-GlcNAc. Functionally, UDP-N-acetylglucosamine--dolichyl-phosphate N-acetylglucosaminephosphotransferase that operates in the biosynthetic pathway of dolichol-linked oligosaccharides, the glycan precursors employed in protein asparagine (N)-glycosylation. The assembly of dolichol-linked oligosaccharides begins on the cytosolic side of the endoplasmic reticulum membrane and finishes in its lumen. The sequential addition of sugars to dolichol pyrophosphate produces dolichol-linked oligosaccharides containing fourteen sugars, including two GlcNAcs, nine mannoses and three glucoses. Once assembled, the oligosaccharide is transferred from the lipid to nascent proteins by oligosaccharyltransferases. Catalyzes the initial step of dolichol-linked oligosaccharide biosynthesis, transfering GlcNAc-1-P from cytosolic UDP-GlcNAc onto the carrier lipid dolichyl phosphate (P-dolichol), yielding GlcNAc-P-P-dolichol embedded in the cytoplasmic leaflet of the endoplasmic reticulum membrane. This is UDP-N-acetylglucosamine--dolichyl-phosphate N-acetylglucosaminephosphotransferase (NAGT) from Leishmania amazonensis.